Here is a 337-residue protein sequence, read N- to C-terminus: D-alanine--D-alanine ligase (337 aa).

In terms of domain architecture, ATP-grasp spans 124-330 (KMWFSALGIP…FTEYLSLVIN (207 aa)). 154–209 (ALAQWGSIFVKAASQGSSVGCYKVDDSAKVAGVLKDAFGYAPYVIVEKTIKARELE) serves as a coordination point for ATP. The Mg(2+) site is built by Asp284, Glu297, and Asn299.

The protein belongs to the D-alanine--D-alanine ligase family. Requires Mg(2+) as cofactor. It depends on Mn(2+) as a cofactor.

The protein resides in the cytoplasm. It carries out the reaction 2 D-alanine + ATP = D-alanyl-D-alanine + ADP + phosphate + H(+). Its pathway is cell wall biogenesis; peptidoglycan biosynthesis. In terms of biological role, cell wall formation. In Shewanella baltica (strain OS223), this protein is D-alanine--D-alanine ligase.